A 510-amino-acid chain; its full sequence is 2,3-bisphosphoglycerate-independent phosphoglycerate mutase (510 aa).

D12 contributes to the Mn(2+) binding site. The residue at position 36 (Y36) is a Phosphotyrosine. A Mn(2+)-binding site is contributed by S62. The active-site Phosphoserine intermediate is S62. Substrate is bound by residues H123, 153–154 (RD), R185, R191, 261–264 (RPDR), and K336. Mn(2+)-binding residues include D403, H407, D444, H445, and H462.

It belongs to the BPG-independent phosphoglycerate mutase family. Monomer. Requires Mn(2+) as cofactor.

It carries out the reaction (2R)-2-phosphoglycerate = (2R)-3-phosphoglycerate. The protein operates within carbohydrate degradation; glycolysis; pyruvate from D-glyceraldehyde 3-phosphate: step 3/5. Essential for rapid growth and for sporulation. Catalyzes the interconversion of 2-phosphoglycerate and 3-phosphoglycerate. In Shouchella clausii (strain KSM-K16) (Alkalihalobacillus clausii), this protein is 2,3-bisphosphoglycerate-independent phosphoglycerate mutase.